Here is a 284-residue protein sequence, read N- to C-terminus: Pantothenate synthetase (284 aa).

30–37 (MGALHEGH) contributes to the ATP binding site. His-37 acts as the Proton donor in catalysis. Gln-61 serves as a coordination point for (R)-pantoate. Residue Gln-61 participates in beta-alanine binding. 147–150 (GEKD) is an ATP binding site. Gln-153 is a (R)-pantoate binding site. Residues Val-176 and 184–187 (TSSR) contribute to the ATP site.

The protein belongs to the pantothenate synthetase family. In terms of assembly, homodimer.

The protein resides in the cytoplasm. The catalysed reaction is (R)-pantoate + beta-alanine + ATP = (R)-pantothenate + AMP + diphosphate + H(+). It participates in cofactor biosynthesis; (R)-pantothenate biosynthesis; (R)-pantothenate from (R)-pantoate and beta-alanine: step 1/1. Catalyzes the condensation of pantoate with beta-alanine in an ATP-dependent reaction via a pantoyl-adenylate intermediate. The sequence is that of Pantothenate synthetase from Chlorobaculum tepidum (strain ATCC 49652 / DSM 12025 / NBRC 103806 / TLS) (Chlorobium tepidum).